Reading from the N-terminus, the 720-residue chain is Phosphoribosylformylglycinamidine synthase subunit PurL (720 aa).

The active site involves histidine 47. ATP-binding residues include tyrosine 50 and lysine 89. Residue glutamate 91 participates in Mg(2+) binding. Substrate contacts are provided by residues 92 to 95 (SHNH) and arginine 114. Histidine 93 (proton acceptor) is an active-site residue. Aspartate 115 contributes to the Mg(2+) binding site. Residue glutamine 238 participates in substrate binding. Mg(2+) is bound at residue aspartate 266. 310 to 312 (ESQ) provides a ligand contact to substrate. ATP-binding residues include aspartate 488 and glycine 525. Asparagine 526 is a Mg(2+) binding site. Position 528 (serine 528) interacts with substrate.

Belongs to the FGAMS family. As to quaternary structure, monomer. Part of the FGAM synthase complex composed of 1 PurL, 1 PurQ and 2 PurS subunits.

It localises to the cytoplasm. It carries out the reaction N(2)-formyl-N(1)-(5-phospho-beta-D-ribosyl)glycinamide + L-glutamine + ATP + H2O = 2-formamido-N(1)-(5-O-phospho-beta-D-ribosyl)acetamidine + L-glutamate + ADP + phosphate + H(+). Its pathway is purine metabolism; IMP biosynthesis via de novo pathway; 5-amino-1-(5-phospho-D-ribosyl)imidazole from N(2)-formyl-N(1)-(5-phospho-D-ribosyl)glycinamide: step 1/2. Its function is as follows. Part of the phosphoribosylformylglycinamidine synthase complex involved in the purines biosynthetic pathway. Catalyzes the ATP-dependent conversion of formylglycinamide ribonucleotide (FGAR) and glutamine to yield formylglycinamidine ribonucleotide (FGAM) and glutamate. The FGAM synthase complex is composed of three subunits. PurQ produces an ammonia molecule by converting glutamine to glutamate. PurL transfers the ammonia molecule to FGAR to form FGAM in an ATP-dependent manner. PurS interacts with PurQ and PurL and is thought to assist in the transfer of the ammonia molecule from PurQ to PurL. The protein is Phosphoribosylformylglycinamidine synthase subunit PurL of Cereibacter sphaeroides (strain ATCC 17023 / DSM 158 / JCM 6121 / CCUG 31486 / LMG 2827 / NBRC 12203 / NCIMB 8253 / ATH 2.4.1.) (Rhodobacter sphaeroides).